An 85-amino-acid polypeptide reads, in one-letter code: Large ribosomal subunit protein bL27 (85 aa).

Residues 1 to 21 form a disordered region; the sequence is MAHKKGVGSTRNGRDSESKRL.

This sequence belongs to the bacterial ribosomal protein bL27 family.

The chain is Large ribosomal subunit protein bL27 from Geobacter sulfurreducens (strain ATCC 51573 / DSM 12127 / PCA).